A 141-amino-acid polypeptide reads, in one-letter code: Large ribosomal subunit protein uL11 (141 aa).

The protein belongs to the universal ribosomal protein uL11 family. As to quaternary structure, part of the ribosomal stalk of the 50S ribosomal subunit. Interacts with L10 and the large rRNA to form the base of the stalk. L10 forms an elongated spine to which L12 dimers bind in a sequential fashion forming a multimeric L10(L12)X complex. Post-translationally, one or more lysine residues are methylated.

In terms of biological role, forms part of the ribosomal stalk which helps the ribosome interact with GTP-bound translation factors. The chain is Large ribosomal subunit protein uL11 from Wolinella succinogenes (strain ATCC 29543 / DSM 1740 / CCUG 13145 / JCM 31913 / LMG 7466 / NCTC 11488 / FDC 602W) (Vibrio succinogenes).